The sequence spans 258 residues: Imidazole glycerol phosphate synthase subunit HisF (258 aa).

Residues aspartate 12 and aspartate 131 contribute to the active site.

Belongs to the HisA/HisF family. Heterodimer of HisH and HisF.

It is found in the cytoplasm. The enzyme catalyses 5-[(5-phospho-1-deoxy-D-ribulos-1-ylimino)methylamino]-1-(5-phospho-beta-D-ribosyl)imidazole-4-carboxamide + L-glutamine = D-erythro-1-(imidazol-4-yl)glycerol 3-phosphate + 5-amino-1-(5-phospho-beta-D-ribosyl)imidazole-4-carboxamide + L-glutamate + H(+). It participates in amino-acid biosynthesis; L-histidine biosynthesis; L-histidine from 5-phospho-alpha-D-ribose 1-diphosphate: step 5/9. In terms of biological role, IGPS catalyzes the conversion of PRFAR and glutamine to IGP, AICAR and glutamate. The HisF subunit catalyzes the cyclization activity that produces IGP and AICAR from PRFAR using the ammonia provided by the HisH subunit. The chain is Imidazole glycerol phosphate synthase subunit HisF from Nocardioides sp. (strain ATCC BAA-499 / JS614).